The chain runs to 110 residues: Large ribosomal subunit protein uL22 (110 aa).

This sequence belongs to the universal ribosomal protein uL22 family. In terms of assembly, part of the 50S ribosomal subunit.

Functionally, this protein binds specifically to 23S rRNA; its binding is stimulated by other ribosomal proteins, e.g. L4, L17, and L20. It is important during the early stages of 50S assembly. It makes multiple contacts with different domains of the 23S rRNA in the assembled 50S subunit and ribosome. The globular domain of the protein is located near the polypeptide exit tunnel on the outside of the subunit, while an extended beta-hairpin is found that lines the wall of the exit tunnel in the center of the 70S ribosome. The sequence is that of Large ribosomal subunit protein uL22 from Syntrophobacter fumaroxidans (strain DSM 10017 / MPOB).